Here is a 268-residue protein sequence, read N- to C-terminus: Nuclear protein UL4 homolog (268 aa).

This sequence belongs to the alphaherpesvirinae HHV-1 UL4 family.

It is found in the host nucleus. The sequence is that of Nuclear protein UL4 homolog (MDV016) from Gallid herpesvirus 2 (strain Chicken/Md5/ATCC VR-987) (GaHV-2).